The chain runs to 471 residues: Adenosylhomocysteinase (471 aa).

Substrate-binding residues include Thr-58, Asp-133, and Glu-195. 196 to 198 (TTT) serves as a coordination point for NAD(+). Residues Lys-225 and Asp-229 each coordinate substrate. NAD(+) is bound by residues Asn-230, 259–264 (GFGDVG), Glu-282, Asn-317, 338–340 (IGH), and Asn-383.

The protein belongs to the adenosylhomocysteinase family. Requires NAD(+) as cofactor.

It is found in the cytoplasm. It catalyses the reaction S-adenosyl-L-homocysteine + H2O = L-homocysteine + adenosine. Its pathway is amino-acid biosynthesis; L-homocysteine biosynthesis; L-homocysteine from S-adenosyl-L-homocysteine: step 1/1. May play a key role in the regulation of the intracellular concentration of adenosylhomocysteine. In Rhodopseudomonas palustris (strain BisB5), this protein is Adenosylhomocysteinase.